The following is a 342-amino-acid chain: Fatty acid desaturase 6 (342 aa).

The next 2 membrane-spanning stretches (helical) occupy residues 39–59 and 63–83; these read GVDC…FLCL and NILA…TLTV. The short motif at 87–91 is the Histidine box-1 element; sequence HLATH. Residues 100–120 traverse the membrane as a helical segment; the sequence is WSKILMIFFLEVCTAFSAEFA. The Histidine box-2 motif lies at 124–128; the sequence is HVNLH. A run of 2 helical transmembrane segments spans residues 151-171 and 185-205; these read YVYM…VALE and LGFI…VSGF. The Histidine box-3 motif lies at 277 to 281; sequence HVEHH.

It belongs to the fatty acid desaturase type 1 family.

The protein resides in the membrane. Its pathway is lipid metabolism; fatty acid metabolism. In Mus musculus (Mouse), this protein is Fatty acid desaturase 6 (Fads6).